The sequence spans 349 residues: S-adenosylmethionine:tRNA ribosyltransferase-isomerase (349 aa).

This sequence belongs to the QueA family. Monomer.

Its subcellular location is the cytoplasm. The catalysed reaction is 7-aminomethyl-7-carbaguanosine(34) in tRNA + S-adenosyl-L-methionine = epoxyqueuosine(34) in tRNA + adenine + L-methionine + 2 H(+). Its pathway is tRNA modification; tRNA-queuosine biosynthesis. Functionally, transfers and isomerizes the ribose moiety from AdoMet to the 7-aminomethyl group of 7-deazaguanine (preQ1-tRNA) to give epoxyqueuosine (oQ-tRNA). The polypeptide is S-adenosylmethionine:tRNA ribosyltransferase-isomerase (Pseudomonas entomophila (strain L48)).